A 214-amino-acid polypeptide reads, in one-letter code: Adenylate kinase (214 aa).

10–15 (GAGKGT) contributes to the ATP binding site. Residues 30-59 (STGDMLRAAVKSGSELGKQAKDIMDAGKLV) form an NMP region. AMP-binding positions include Thr-31, Arg-36, 57–59 (KLV), 85–88 (GFPR), and Gln-92. Residues 122–159 (GRRVHAPSGRVYHVKFNPPKVEGKDDVTGEELTTRKDD) are LID. ATP contacts are provided by residues Arg-123 and 132-133 (VY). Positions 156 and 167 each coordinate AMP. At Lys-192 the chain carries N6-acetyllysine. Lys-200 serves as a coordination point for ATP.

This sequence belongs to the adenylate kinase family. Monomer.

The protein localises to the cytoplasm. It carries out the reaction AMP + ATP = 2 ADP. It participates in purine metabolism; AMP biosynthesis via salvage pathway; AMP from ADP: step 1/1. Functionally, catalyzes the reversible transfer of the terminal phosphate group between ATP and AMP. Plays an important role in cellular energy homeostasis and in adenine nucleotide metabolism. This is Adenylate kinase from Escherichia coli O45:K1 (strain S88 / ExPEC).